The sequence spans 512 residues: tRNA-2-methylthio-N(6)-dimethylallyladenosine synthase (512 aa).

The 117-residue stretch at 17-133 (RTYEVRTFGC…LPTLLERSAH (117 aa)) folds into the MTTase N-terminal domain. Positions 26, 62, 96, 170, 174, and 177 each coordinate [4Fe-4S] cluster. The Radical SAM core domain maps to 156–392 (RESAYAGWVS…LALQERISEE (237 aa)). Residues 395-461 (RKLIGTTQEL…PHFLIADGGV (67 aa)) form the TRAM domain. The tract at residues 473–512 (TELGETPTTAPVGVGLGMPSIKKPEPTTAGGCSTGGCGCE) is disordered.

The protein belongs to the methylthiotransferase family. MiaB subfamily. As to quaternary structure, monomer. Requires [4Fe-4S] cluster as cofactor.

It is found in the cytoplasm. It carries out the reaction N(6)-dimethylallyladenosine(37) in tRNA + (sulfur carrier)-SH + AH2 + 2 S-adenosyl-L-methionine = 2-methylsulfanyl-N(6)-dimethylallyladenosine(37) in tRNA + (sulfur carrier)-H + 5'-deoxyadenosine + L-methionine + A + S-adenosyl-L-homocysteine + 2 H(+). In terms of biological role, catalyzes the methylthiolation of N6-(dimethylallyl)adenosine (i(6)A), leading to the formation of 2-methylthio-N6-(dimethylallyl)adenosine (ms(2)i(6)A) at position 37 in tRNAs that read codons beginning with uridine. This is tRNA-2-methylthio-N(6)-dimethylallyladenosine synthase from Corynebacterium jeikeium (strain K411).